The primary structure comprises 1617 residues: ATP-binding cassette sub-family A member 6 (1617 aa).

A helical transmembrane segment spans residues 31-51 (LLEWGLSILLGLCIALFSSSM). Residues Asn84 and Asn109 are each glycosylated (N-linked (GlcNAc...) asparagine). The next 6 helical transmembrane spans lie at 222–242 (MFIL…SLNV), 268–288 (GLIY…IITF), 297–317 (FMVI…LVFL), 327–347 (LTNL…FTVF), 355–375 (LEWI…IQII), and 397–417 (IATF…ALYF). Residues 478 to 713 (IRIRNVKKEY…WGLGYHLSLH (236 aa)) form the ABC transporter 1 domain. 514–521 (GHSGAGKS) is a binding site for ATP. Residues 854 to 874 (VLLTLLLVFGIAIFPLIVENI) form a helical membrane-spanning segment. A glycan (N-linked (GlcNAc...) asparagine) is linked at Asn940. Transmembrane regions (helical) follow at residues 1007–1027 (IGLW…LCSI), 1062–1082 (ALVD…IFYI), 1094–1114 (IVFA…FFIY), 1127–1147 (SGLW…ITLI), 1150–1170 (FDLS…LLGF), and 1194–1214 (ATDF…VFVL). Residues 1288–1513 (GQKKSCFSKR…LGKDYILELK (226 aa)) enclose the ABC transporter 2 domain. 1320-1327 (GPNGAGKS) contributes to the ATP binding site.

It belongs to the ABC transporter superfamily. ABCA family. Widely expressed with higher expression in liver.

The protein localises to the golgi apparatus membrane. In terms of biological role, probable transporter which may play a role in macrophage lipid transport and homeostasis. The protein is ATP-binding cassette sub-family A member 6 (ABCA6) of Homo sapiens (Human).